The chain runs to 968 residues: Protein translocase subunit SecA 1 (968 aa).

Residues Gln86, 104–108 (GEGKT), and Asp493 contribute to the ATP site. 2 stretches are compositionally biased toward basic and acidic residues: residues 858–868 (EAEKTEDKAED) and 883–898 (ESAKDTAQDKDAESVA). The segment at 858–968 (EAEKTEDKAE…KCHGAPKSRV (111 aa)) is disordered. Residues Cys949, Cys951, Cys960, and His961 each coordinate Zn(2+). Residues 955 to 968 (KKYKKCHGAPKSRV) show a composition bias toward basic residues.

This sequence belongs to the SecA family. In terms of assembly, monomer and homodimer. Part of the essential Sec protein translocation apparatus which comprises SecA, SecYEG and auxiliary proteins SecDF. Other proteins may also be involved. Zn(2+) is required as a cofactor.

The protein resides in the cell membrane. It localises to the cytoplasm. It catalyses the reaction ATP + H2O + cellular proteinSide 1 = ADP + phosphate + cellular proteinSide 2.. Its function is as follows. Part of the Sec protein translocase complex. Interacts with the SecYEG preprotein conducting channel. Has a central role in coupling the hydrolysis of ATP to the transfer of proteins into and across the cell membrane, serving as an ATP-driven molecular motor driving the stepwise translocation of polypeptide chains across the membrane. The chain is Protein translocase subunit SecA 1 from Thermobifida fusca (strain YX).